A 455-amino-acid polypeptide reads, in one-letter code: DENN domain-containing protein 11 (455 aa).

Residues 1 to 59 are disordered; that stretch reads MVEQGDAAPLLRWAEGPAVSVPQDPALQAGGWVRGGSGEGRVAAEAPRRREPDEPAPPE. V2 is modified (N-acetylvaline). The uDENN domain maps to 15–187; that stretch reads EGPAVSVPQD…QLEMPGHYSH (173 aa). Residue R41 is modified to Omega-N-methylarginine. Residues 214–362 form the cDENN domain; that stretch reads WLPSIHRYMY…INSADREKYR (149 aa). The 92-residue stretch at 364-455 folds into the dDENN domain; sequence LNEQRQMLLY…MLVIDNPCCP (92 aa).

It belongs to the DENND11 family.

In terms of biological role, probable guanine nucleotide exchange factor (GEF). May promote the exchange of GDP to GTP, converting inactive GDP-bound small GTPases into their active GTP-bound form. May play a role in neuritogenesis, as well as in neuronal recovery and/or restructuring in the hippocampus following transient cerebral ischemia. This Mus musculus (Mouse) protein is DENN domain-containing protein 11 (Dennd11).